A 179-amino-acid polypeptide reads, in one-letter code: Large ribosomal subunit protein uL5 (179 aa).

The protein belongs to the universal ribosomal protein uL5 family. Part of the 50S ribosomal subunit; part of the 5S rRNA/L5/L18/L25 subcomplex. Contacts the 5S rRNA and the P site tRNA. Forms a bridge to the 30S subunit in the 70S ribosome.

Functionally, this is one of the proteins that bind and probably mediate the attachment of the 5S RNA into the large ribosomal subunit, where it forms part of the central protuberance. In the 70S ribosome it contacts protein S13 of the 30S subunit (bridge B1b), connecting the 2 subunits; this bridge is implicated in subunit movement. Contacts the P site tRNA; the 5S rRNA and some of its associated proteins might help stabilize positioning of ribosome-bound tRNAs. This chain is Large ribosomal subunit protein uL5, found in Cronobacter sakazakii (strain ATCC BAA-894) (Enterobacter sakazakii).